A 303-amino-acid chain; its full sequence is Siderophore enterobactin esterase (303 aa).

This sequence belongs to the esterase D family. In terms of assembly, homodimer.

It catalyses the reaction enterobactin + 3 H2O = 3 N-(2,3-dihydroxybenzoyl)-L-serine + 2 H(+). Its function is as follows. Displays specific enterobactin (ENB) esterase activity required for intracellular release of iron. Enterobactin is a xenosiderophore that is selectively produced by Gram-negative Enterobacteriaceae. The affinity for enterobactin is quite high, potentially due to the low natural abundance of this xenosiderophore in fungal habitats. Does not hydrolyze triacetylfusarinine C (TAFC). This Emericella nidulans (strain FGSC A4 / ATCC 38163 / CBS 112.46 / NRRL 194 / M139) (Aspergillus nidulans) protein is Siderophore enterobactin esterase.